A 344-amino-acid polypeptide reads, in one-letter code: Dihydroorotase (344 aa).

Residues H13 and H15 each contribute to the Zn(2+) site. Substrate-binding positions include 15-17 (HLR) and N41. Zn(2+) is bound by residues K98, H135, and H173. N6-carboxylysine is present on K98. A substrate-binding site is contributed by H135. L218 is a substrate binding site. A Zn(2+)-binding site is contributed by D247. D247 is an active-site residue. H251 and A263 together coordinate substrate.

It belongs to the metallo-dependent hydrolases superfamily. DHOase family. Class II DHOase subfamily. As to quaternary structure, homodimer. Zn(2+) is required as a cofactor.

The enzyme catalyses (S)-dihydroorotate + H2O = N-carbamoyl-L-aspartate + H(+). The protein operates within pyrimidine metabolism; UMP biosynthesis via de novo pathway; (S)-dihydroorotate from bicarbonate: step 3/3. Functionally, catalyzes the reversible cyclization of carbamoyl aspartate to dihydroorotate. The polypeptide is Dihydroorotase (Neisseria gonorrhoeae (strain NCCP11945)).